Reading from the N-terminus, the 55-residue chain is Probable Rubredoxin-2 (55 aa).

Residues 4–54 form the Rubredoxin-like domain; that stretch reads MARYQCMCGWVYDEDKGEPSQNIPPGTKFEDLPDTFRCPQCGLGKNAFRKI. Cysteine 9, cysteine 11, cysteine 41, and cysteine 44 together coordinate Fe cation.

It belongs to the rubredoxin family. Fe(3+) is required as a cofactor.

Its function is as follows. Rubredoxin is a small nonheme, iron protein lacking acid-labile sulfide. Its single Fe, chelated to 4 Cys, functions as an electron acceptor and may also stabilize the conformation of the molecule. The protein is Probable Rubredoxin-2 of Methanocaldococcus jannaschii (strain ATCC 43067 / DSM 2661 / JAL-1 / JCM 10045 / NBRC 100440) (Methanococcus jannaschii).